Here is a 154-residue protein sequence, read N- to C-terminus: Putative esterase AF_2264 (154 aa).

It belongs to the thioesterase PaaI family.

In Archaeoglobus fulgidus (strain ATCC 49558 / DSM 4304 / JCM 9628 / NBRC 100126 / VC-16), this protein is Putative esterase AF_2264.